Reading from the N-terminus, the 418-residue chain is Maltoporin (418 aa).

A signal peptide spans 1-26; the sequence is MLPMNRNTLGLAVTIATVFVSSTVTA.

It belongs to the porin LamB (TC 1.B.3) family. Homotrimer formed of three 18-stranded antiparallel beta-barrels, containing three independent channels.

The protein localises to the cell outer membrane. It carries out the reaction beta-maltose(in) = beta-maltose(out). Involved in the transport of maltose and maltodextrins. The protein is Maltoporin of Photobacterium profundum (strain SS9).